The chain runs to 290 residues: Glycine--tRNA ligase alpha subunit (290 aa).

The protein belongs to the class-II aminoacyl-tRNA synthetase family. In terms of assembly, tetramer of two alpha and two beta subunits.

It is found in the cytoplasm. The enzyme catalyses tRNA(Gly) + glycine + ATP = glycyl-tRNA(Gly) + AMP + diphosphate. This is Glycine--tRNA ligase alpha subunit from Syntrophotalea carbinolica (strain DSM 2380 / NBRC 103641 / GraBd1) (Pelobacter carbinolicus).